The following is a 406-amino-acid chain: Tyrosine--tRNA ligase (406 aa).

The 'HIGH' region motif lies at Pro51–His60. A 'KMSKS' region motif is present at residues Lys236–Ser240. Lys239 contacts ATP. The S4 RNA-binding domain occupies Ile345–Val405.

The protein belongs to the class-I aminoacyl-tRNA synthetase family. TyrS type 2 subfamily. In terms of assembly, homodimer.

The protein localises to the cytoplasm. The enzyme catalyses tRNA(Tyr) + L-tyrosine + ATP = L-tyrosyl-tRNA(Tyr) + AMP + diphosphate + H(+). Catalyzes the attachment of tyrosine to tRNA(Tyr) in a two-step reaction: tyrosine is first activated by ATP to form Tyr-AMP and then transferred to the acceptor end of tRNA(Tyr). This is Tyrosine--tRNA ligase from Wolinella succinogenes (strain ATCC 29543 / DSM 1740 / CCUG 13145 / JCM 31913 / LMG 7466 / NCTC 11488 / FDC 602W) (Vibrio succinogenes).